We begin with the raw amino-acid sequence, 92 residues long: Small ribosomal subunit protein uS19c (92 aa).

Belongs to the universal ribosomal protein uS19 family.

Its subcellular location is the plastid. The protein localises to the chloroplast. Protein S19 forms a complex with S13 that binds strongly to the 16S ribosomal RNA. In Nephroselmis olivacea (Green alga), this protein is Small ribosomal subunit protein uS19c.